The primary structure comprises 149 residues: Calmodulin (149 aa).

The residue at position 2 (A2) is an N-acetylalanine. EF-hand domains follow at residues 8-43 (EQIA…LGQN), 44-79 (PTEA…KMKD), 81-116 (DTEE…LGEK), and 117-149 (LTDE…MMAK). 14 residues coordinate Ca(2+): D21, D23, D25, T27, E32, D57, D59, N61, T63, E68, D94, D96, N98, and E105. K116 bears the N6,N6,N6-trimethyllysine mark. Residues D130, D132, D134, H136, and E141 each coordinate Ca(2+).

Belongs to the calmodulin family.

Functionally, calmodulin mediates the control of a large number of enzymes, ion channels and other proteins by Ca(2+). Among the enzymes to be stimulated by the calmodulin-Ca(2+) complex are a number of protein kinases and phosphatases. This is Calmodulin from Tetrahymena pyriformis.